Reading from the N-terminus, the 443-residue chain is uncharacterized protein (443 aa).

The next 4 helical transmembrane spans lie at 15–35 (IYAGAGPAPMLAAAVAWDGLA), 38–58 (LGMAAASFSLLISGLTAGPGS), 59–79 (AWQGPAAAAMAAAAAPYLSWL), and 181–201 (VVTAAPAGAVGVPAALAIPAL). The segment at 231-270 (NFGIGNIGNANLGNGNIGNANLGSGNAGFFNFGNGNDGNT) is 4 X 10 AA approximate repeats.

It belongs to the mycobacterial PPE family.

The protein resides in the cell membrane. This is an uncharacterized protein from Mycobacterium tuberculosis (strain ATCC 25618 / H37Rv).